A 764-amino-acid chain; its full sequence is 5-methyltetrahydropteroyltriglutamate--homocysteine methyltransferase (764 aa).

5-methyltetrahydropteroyltri-L-glutamate is bound by residues 19-22 (RELK) and Lys-113. L-homocysteine-binding positions include 435-437 (IGS) and Glu-488. Residues 435–437 (IGS) and Glu-488 each bind L-methionine. 5-methyltetrahydropteroyltri-L-glutamate-binding positions include 519–520 (RC) and Trp-565. Asp-603 contributes to the L-homocysteine binding site. Asp-603 serves as a coordination point for L-methionine. Residue Glu-609 participates in 5-methyltetrahydropteroyltri-L-glutamate binding. Zn(2+) contacts are provided by His-645, Cys-647, and Glu-669. The active-site Proton donor is His-698. A Zn(2+)-binding site is contributed by Cys-730.

This sequence belongs to the vitamin-B12 independent methionine synthase family. The cofactor is Zn(2+).

It carries out the reaction 5-methyltetrahydropteroyltri-L-glutamate + L-homocysteine = tetrahydropteroyltri-L-glutamate + L-methionine. The protein operates within amino-acid biosynthesis; L-methionine biosynthesis via de novo pathway; L-methionine from L-homocysteine (MetE route): step 1/1. Catalyzes the transfer of a methyl group from 5-methyltetrahydrofolate to homocysteine resulting in methionine formation. The chain is 5-methyltetrahydropteroyltriglutamate--homocysteine methyltransferase from Desulforamulus reducens (strain ATCC BAA-1160 / DSM 100696 / MI-1) (Desulfotomaculum reducens).